The following is a 372-amino-acid chain: Chaperone protein DnaJ (372 aa).

Residues 5–70 (DYYELLEISR…EKKSIYDRYG (66 aa)) enclose the J domain. The CR-type zinc finger occupies 134 to 211 (GCNKEINYKY…CKGTGYEEVK (78 aa)). The Zn(2+) site is built by Cys147, Cys150, Cys163, Cys166, Cys185, Cys188, Cys199, and Cys202. CXXCXGXG motif repeat units follow at residues 147-154 (CKPCEGTG), 163-170 (CPTCKGQG), 185-192 (CPRCGGTG), and 199-206 (CKSCKGTG).

Belongs to the DnaJ family. As to quaternary structure, homodimer. Requires Zn(2+) as cofactor.

The protein resides in the cytoplasm. Its function is as follows. Participates actively in the response to hyperosmotic and heat shock by preventing the aggregation of stress-denatured proteins and by disaggregating proteins, also in an autonomous, DnaK-independent fashion. Unfolded proteins bind initially to DnaJ; upon interaction with the DnaJ-bound protein, DnaK hydrolyzes its bound ATP, resulting in the formation of a stable complex. GrpE releases ADP from DnaK; ATP binding to DnaK triggers the release of the substrate protein, thus completing the reaction cycle. Several rounds of ATP-dependent interactions between DnaJ, DnaK and GrpE are required for fully efficient folding. Also involved, together with DnaK and GrpE, in the DNA replication of plasmids through activation of initiation proteins. This chain is Chaperone protein DnaJ, found in Aliarcobacter butzleri (strain RM4018) (Arcobacter butzleri).